The sequence spans 672 residues: MSDKGELMEEIMEAKVMWYPDSKKITQMDQFRNRVNRNLGLRLANYNELYQWSVEFYPEFWAEFWDFSGIVYSKTYDEVIDRSKGIADVPEWFKGSRLNYAENLLKHKENDKIALYSAREGKENIEKVTFAELRRDVALFAAAMRKMGIKTGDRVAGYLPNCIQTVEAMLAAASIGAIWSATSPDFGVNGVLDRFSQIQPKLILSVESVIYNGKEHCHLEKLQHVVKGLPDLKKVVVIPYVLPKEKIDISKIPNSMFLDEFLATGKVGDQSPQLEFEQLPFNHPLYIMYSSGTTGAPKCMVHSAGGTLIKHLTEHILHGSTTSSDVIMYYTTAGWMMWNWLITAVATGASLVLYDGSPLVPSLNVLWDLVDRLGITILGTGAKWLAVLEDKGLKPCNTHSLQTLHTILSTGSPLKPQSYEYVYKHIKSNVLLGSVSGGTDIIACFMGQNVSVPVYKGEIQARHLGMAIEAWNEEGEAVLGESGELVCLKPLPSQPTHFWNDENGSKYQKAYFAKFPGVWAHGDYCKINPKTGGIVMLGRSDGTLNPNGVRFGSSEIYNIVEAFVEVSDSLCVPQYNKDGDERVILFLKMADKFEFSKELLKRIKDAIRVALSARHVPALILETKDIPYTISGKKVEVAVKQVIAGKEVPHRGAFSNPQSLDLYRNIPELQNF.

This sequence belongs to the ATP-dependent AMP-binding enzyme family.

Its subcellular location is the cytoplasm. It is found in the cytosol. The enzyme catalyses acetoacetate + ATP + CoA = acetoacetyl-CoA + AMP + diphosphate. Activates acetoacetate to acetoacetyl-CoA. The sequence is that of Acetoacetyl-CoA synthetase (aacs) from Xenopus tropicalis (Western clawed frog).